Here is a 265-residue protein sequence, read N- to C-terminus: uncharacterized protein (265 aa).

This sequence belongs to the ycf23 family.

Its subcellular location is the plastid. It is found in the chloroplast. This is an uncharacterized protein from Porphyra purpurea (Red seaweed).